Consider the following 358-residue polypeptide: 3-isopropylmalate dehydrogenase (358 aa).

Position 75–88 (75–88 (GPKWETLPPEKQPE)) interacts with NAD(+). Residues R96, R106, R135, and D225 each coordinate substrate. Residues D225, D249, and D253 each coordinate Mg(2+). 283-295 (GSAPDIAGKGVAN) contacts NAD(+).

Belongs to the isocitrate and isopropylmalate dehydrogenases family. LeuB type 1 subfamily. As to quaternary structure, homodimer. The cofactor is Mg(2+). It depends on Mn(2+) as a cofactor.

Its subcellular location is the cytoplasm. It catalyses the reaction (2R,3S)-3-isopropylmalate + NAD(+) = 4-methyl-2-oxopentanoate + CO2 + NADH. Its pathway is amino-acid biosynthesis; L-leucine biosynthesis; L-leucine from 3-methyl-2-oxobutanoate: step 3/4. Its function is as follows. Catalyzes the oxidation of 3-carboxy-2-hydroxy-4-methylpentanoate (3-isopropylmalate) to 3-carboxy-4-methyl-2-oxopentanoate. The product decarboxylates to 4-methyl-2 oxopentanoate. The protein is 3-isopropylmalate dehydrogenase of Leptospira interrogans serogroup Icterohaemorrhagiae serovar copenhageni (strain Fiocruz L1-130).